We begin with the raw amino-acid sequence, 418 residues long: Multidrug resistance protein MdtG (418 aa).

Transmembrane regions (helical) follow at residues 19–39, 56–76, 90–110, 113–133, 144–164, 171–191, 222–242, 251–271, 288–308, 317–337, and 376–396; these read IGCFLTGAAFSLVMPFLPLYV, LVFSITFLFSAIASPFWGGLA, LGMAIVMLLMGLAQNIWQFLI, ALLGLLGGFIPNANALIATQI, TLSTGGVSGALLGPLVGGVLA, PVFFMTASVLFLCFLLTLLFI, LFVTTLIIQVATGSIAPILTL, VANIAFISGMIASVPGVAALI, ILIAALVISVLLLIPMSFVQT, FLLGAADGALLPAVQTLLVYN, and AVFLVTAMVVLFNAVYTGLSL.

The protein belongs to the major facilitator superfamily. DHA1 family. MdtG (TC 2.A.1.2.20) subfamily.

It is found in the cell inner membrane. This Enterobacter lignolyticus (strain SCF1) protein is Multidrug resistance protein MdtG.